The primary structure comprises 368 residues: Ferredoxin--NADP reductase 2 (368 aa).

FAD is bound by residues aspartate 57, glutamine 65, tyrosine 70, valine 110, phenylalanine 145, aspartate 310, and threonine 351.

Belongs to the ferredoxin--NADP reductase type 2 family. Homodimer. The cofactor is FAD.

It carries out the reaction 2 reduced [2Fe-2S]-[ferredoxin] + NADP(+) + H(+) = 2 oxidized [2Fe-2S]-[ferredoxin] + NADPH. This chain is Ferredoxin--NADP reductase 2, found in Cupriavidus pinatubonensis (strain JMP 134 / LMG 1197) (Cupriavidus necator (strain JMP 134)).